Consider the following 333-residue polypeptide: COMPASS-like H3K4 histone methylase component WDR5B (333 aa).

8 WD repeats span residues 1 to 40, 41 to 80, 83 to 122, 126 to 167, 169 to 207, 211 to 252, 253 to 295, and 298 to 333; these read MPSG…KTLE, GHTA…LIHR, GHSS…ECLK, GHTN…RMIK, HSMP…CLKT, DKSP…KVYT, GHTN…ILQR, and GHTD…KQDA.

Unlike WDR5A, does not interact with RBL or TRO.

The sequence is that of COMPASS-like H3K4 histone methylase component WDR5B from Arabidopsis thaliana (Mouse-ear cress).